We begin with the raw amino-acid sequence, 326 residues long: MYGIEYTTVLTFLISLVFVNYILKSVTRAMDFIIYRFLLVIILLAPFIKTQNYGINLPITGSMDTPYMNSTTSETFLTSTLCLYYPNEAATEIADTKWTETLSQLFLTKGWPTGSVYFKGYADIASFSVEPQLYCDYNIVLMKYDGNLQLDMSELADLILNEWLCNPMDITLYYYQQTDEANKWISMGTSCTIKVCPLNTQTLGIGCSTTDINSFEIVANAEKLAITDVVDGVNHKLDVTTNTCTIRNCKKLGPRENVAVIQVGGPNILDITADPTTAPQTERMMRINWKRWWQVFYTIVDYVNQIVQVMSKRSRSLNSAAFYYRV.

The N-terminal stretch at Met-1–Thr-50 is a signal peptide. N-linked (GlcNAc...) asparagine; by host glycosylation is present at Asn-69. Intrachain disulfides connect Cys-82/Cys-135, Cys-165/Cys-249, Cys-191/Cys-244, and Cys-196/Cys-207. Residue Asp-95 participates in Ca(2+) binding. Residues Cys-165–Pro-167 form a CNP motif; interaction with ITGAV/ITGB3 region. Gln-177, Gly-206, Ser-214, Glu-216, Asp-228, Val-229, and Asp-231 together coordinate Ca(2+). The LVD motif; interaction with ITGA4/ITGB1 heterodimer stretch occupies residues Leu-237–Val-239. Residues Gly-253–Arg-255 are GPR motif; interaction with ITGAX/ITGB2. A Ca(2+)-binding site is contributed by Asp-301.

It belongs to the rotavirus VP7 family. Homotrimer; disulfide-linked. 2 Ca(2+) ions bound at each subunit interface in the trimer hold the trimer together. Interacts with the intermediate capsid protein VP6. Interacts with the outer capsid protein VP5*. N-glycosylated. In terms of processing, the N-terminus is blocked possibly by pyroglutamic acid.

The protein localises to the virion. The protein resides in the host endoplasmic reticulum lumen. Its function is as follows. Calcium-binding protein that interacts with rotavirus cell receptors once the initial attachment by VP4 has been achieved. Rotavirus attachment and entry into the host cell probably involves multiple sequential contacts between the outer capsid proteins VP4 and VP7, and the cell receptors. Following entry into the host cell, low intracellular or intravesicular Ca(2+) concentration probably causes the calcium-stabilized VP7 trimers to dissociate from the virion. This step is probably necessary for the membrane-disrupting entry step and the release of VP4, which is locked onto the virion by VP7. The protein is Outer capsid glycoprotein VP7 of Sus scrofa (Pig).